Here is a 90-residue protein sequence, read N- to C-terminus: MANHSSAKKAARQTVKRTLINKARSSAIKTFIKKVVHEISLGNKENANLALSVAQSKIMQGVKKNIIKLNTASRKISRLSKQIKSLNESK.

This sequence belongs to the bacterial ribosomal protein bS20 family.

Functionally, binds directly to 16S ribosomal RNA. The polypeptide is Small ribosomal subunit protein bS20 (Rickettsia akari (strain Hartford)).